A 158-amino-acid polypeptide reads, in one-letter code: Protein NrdI (158 aa).

The protein belongs to the NrdI family.

Its function is as follows. Probably involved in ribonucleotide reductase function. This Rhodococcus jostii (strain RHA1) protein is Protein NrdI.